A 147-amino-acid chain; its full sequence is Lysozyme C, tracheal isozyme (147 aa).

A signal peptide spans 1-18; that stretch reads MKALLILGLLLLSVAVQG. The C-type lysozyme domain maps to 19–147; that stretch reads KTFKRCELAK…LTSYVKGCGV (129 aa). 4 disulfide bridges follow: Cys-24–Cys-145, Cys-48–Cys-133, Cys-83–Cys-99, and Cys-95–Cys-113. Residues Glu-53 and Asp-71 contribute to the active site.

This sequence belongs to the glycosyl hydrolase 22 family. As to quaternary structure, monomer. In terms of tissue distribution, trachea.

The enzyme catalyses Hydrolysis of (1-&gt;4)-beta-linkages between N-acetylmuramic acid and N-acetyl-D-glucosamine residues in a peptidoglycan and between N-acetyl-D-glucosamine residues in chitodextrins.. Its function is as follows. Lysozymes have primarily a bacteriolytic function; those in tissues and body fluids are associated with the monocyte-macrophage system and enhance the activity of immunoagents. This is Lysozyme C, tracheal isozyme from Bos taurus (Bovine).